Reading from the N-terminus, the 182-residue chain is Acireductone dioxygenase (182 aa).

Residues His-100, His-102, Glu-106, and His-145 each contribute to the Fe(2+) site. Positions 100, 102, 106, and 145 each coordinate Ni(2+).

It belongs to the acireductone dioxygenase (ARD) family. As to quaternary structure, monomer. It depends on Fe(2+) as a cofactor. Ni(2+) serves as cofactor.

It carries out the reaction 1,2-dihydroxy-5-(methylsulfanyl)pent-1-en-3-one + O2 = 3-(methylsulfanyl)propanoate + CO + formate + 2 H(+). The enzyme catalyses 1,2-dihydroxy-5-(methylsulfanyl)pent-1-en-3-one + O2 = 4-methylsulfanyl-2-oxobutanoate + formate + 2 H(+). It functions in the pathway amino-acid biosynthesis; L-methionine biosynthesis via salvage pathway; L-methionine from S-methyl-5-thio-alpha-D-ribose 1-phosphate: step 5/6. Functionally, catalyzes 2 different reactions between oxygen and the acireductone 1,2-dihydroxy-3-keto-5-methylthiopentene (DHK-MTPene) depending upon the metal bound in the active site. Fe-containing acireductone dioxygenase (Fe-ARD) produces formate and 2-keto-4-methylthiobutyrate (KMTB), the alpha-ketoacid precursor of methionine in the methionine recycle pathway. Ni-containing acireductone dioxygenase (Ni-ARD) produces methylthiopropionate, carbon monoxide and formate, and does not lie on the methionine recycle pathway. This chain is Acireductone dioxygenase, found in Nostoc sp. (strain PCC 7120 / SAG 25.82 / UTEX 2576).